We begin with the raw amino-acid sequence, 692 residues long: Acyl-coenzyme A oxidase 2, peroxisomal (692 aa).

Residues 1 to 49 (MESRREKNPMTEEESDGLIAARRIQRLSLHLSPSLTPSPSLPLVQTETC) constitute a peroxisome transit peptide. 7 residues coordinate FAD: Thr186, Ser192, Gly225, Arg365, Gln384, Gly452, and Thr473. The active-site Proton acceptor is the Glu475. An FAD-binding site is contributed by Asp477.

The protein belongs to the acyl-CoA oxidase family. Homodimer. FAD serves as cofactor. As to expression, expressed mainly in flowers and young seedlings. Lower expression in roots, leaves and bracts.

It localises to the peroxisome. It catalyses the reaction a 2,3-saturated acyl-CoA + O2 = a (2E)-enoyl-CoA + H2O2. In terms of biological role, catalyzes the desaturation of long-chain acyl-CoAs to 2-trans-enoyl-CoAs. Active on substrates longer than C14 and mostly with C18-CoA. Activity on long-chain mono-unsaturated substrates is double than with the corresponding saturated substrates. The chain is Acyl-coenzyme A oxidase 2, peroxisomal from Arabidopsis thaliana (Mouse-ear cress).